Consider the following 47-residue polypeptide: Antimicrobial peptide LCI (47 aa).

The protein localises to the secreted. Its function is as follows. Has antibacterial activity against X.oryzae pv oryzae and R.solanacearum, but not E.coli or P.carotovorum subsp carotovorum. May bind DNA or mRNA. The chain is Antimicrobial peptide LCI from Bacillus subtilis.